A 66-amino-acid polypeptide reads, in one-letter code: MPKMKTKSSAKKRFKMTATGKVRAGQAGKRHGMIKRTTKFIRTARGTTILSAPDAKIVKSYMPYSR.

Over residues 1 to 15 the composition is skewed to basic residues; sequence MPKMKTKSSAKKRFK. The disordered stretch occupies residues 1-32; that stretch reads MPKMKTKSSAKKRFKMTATGKVRAGQAGKRHG.

Belongs to the bacterial ribosomal protein bL35 family.

The polypeptide is Large ribosomal subunit protein bL35 (Dinoroseobacter shibae (strain DSM 16493 / NCIMB 14021 / DFL 12)).